Reading from the N-terminus, the 944-residue chain is Breast cancer type 2 susceptibility protein homolog (944 aa).

2 stretches are compositionally biased toward basic and acidic residues: residues 325 to 348 (KKVK…ESKI) and 415 to 431 (NSIK…ETPN). Disordered regions lie at residues 325–354 (KKVK…ASCD) and 415–440 (NSIK…SSHQ). 3 BRCA2 repeats span residues 543–577 (AEPE…EFQS), 644–678 (NESQ…QSRA), and 719–753 (SETE…EFQA). Disordered regions lie at residues 823–854 (LCSQ…LDQA) and 876–944 (SSTE…RSRY). Polar residues-rich tracts occupy residues 838 to 852 (IHSS…SPLD) and 876 to 885 (SSTETSTSCA). A compositionally biased stretch (basic and acidic residues) spans 904–921 (ADRDLNRSKDCAKNRQDA). The segment covering 932–944 (KKSRRLGLSRSRY) has biased composition (basic residues).

In terms of assembly, interacts with Rad9 and spn-A/Rad51.

The protein localises to the nucleus. Its function is as follows. Involved in and required for double-strand break repair by meiotic and mitotic homologous recombination. During meiosis, has a dual role in the repair of meiotic double-stranded breaks and the efficient activation of the meiotic recombination checkpoint. This Drosophila simulans (Fruit fly) protein is Breast cancer type 2 susceptibility protein homolog.